The chain runs to 443 residues: D-serine dehydratase (443 aa).

At K118 the chain carries N6-(pyridoxal phosphate)lysine.

This sequence belongs to the serine/threonine dehydratase family. DsdA subfamily. In terms of assembly, monomer. Pyridoxal 5'-phosphate is required as a cofactor.

The catalysed reaction is D-serine = pyruvate + NH4(+). In Yersinia enterocolitica serotype O:8 / biotype 1B (strain NCTC 13174 / 8081), this protein is D-serine dehydratase.